Consider the following 215-residue polypeptide: N-(5'-phosphoribosyl)anthranilate isomerase (215 aa).

Belongs to the TrpF family.

It carries out the reaction N-(5-phospho-beta-D-ribosyl)anthranilate = 1-(2-carboxyphenylamino)-1-deoxy-D-ribulose 5-phosphate. It participates in amino-acid biosynthesis; L-tryptophan biosynthesis; L-tryptophan from chorismate: step 3/5. In Paramagnetospirillum magneticum (strain ATCC 700264 / AMB-1) (Magnetospirillum magneticum), this protein is N-(5'-phosphoribosyl)anthranilate isomerase.